We begin with the raw amino-acid sequence, 67 residues long: Large ribosomal subunit protein bL31c (67 aa).

This sequence belongs to the bacterial ribosomal protein bL31 family. Type A subfamily. Part of the 50S ribosomal subunit.

The protein resides in the plastid. It localises to the chloroplast. In terms of biological role, binds the 23S rRNA. This Cyanidioschyzon merolae (strain NIES-3377 / 10D) (Unicellular red alga) protein is Large ribosomal subunit protein bL31c (rpl31).